Here is a 45-residue protein sequence, read N- to C-terminus: Photosystem II reaction center protein K (45 aa).

Positions 1-8 are excised as a propeptide; sequence METIYLLA. Residues 16 to 40 traverse the membrane as a helical segment; the sequence is IFDPLVDVLPVIPLFFLALAFVWQA.

It belongs to the PsbK family. In terms of assembly, PSII is composed of 1 copy each of membrane proteins PsbA, PsbB, PsbC, PsbD, PsbE, PsbF, PsbH, PsbI, PsbJ, PsbK, PsbL, PsbM, PsbT, PsbX, PsbY, PsbZ, Psb30/Ycf12, peripheral proteins PsbO, CyanoQ (PsbQ), PsbU, PsbV and a large number of cofactors. It forms dimeric complexes.

It localises to the cellular thylakoid membrane. In terms of biological role, one of the components of the core complex of photosystem II (PSII). PSII is a light-driven water:plastoquinone oxidoreductase that uses light energy to abstract electrons from H(2)O, generating O(2) and a proton gradient subsequently used for ATP formation. It consists of a core antenna complex that captures photons, and an electron transfer chain that converts photonic excitation into a charge separation. The chain is Photosystem II reaction center protein K from Synechocystis sp. (strain ATCC 27184 / PCC 6803 / Kazusa).